Reading from the N-terminus, the 694-residue chain is Nucleolin (694 aa).

The tract at residues 1-277 (MVKLAKTPKN…EAKKKKTETP (277 aa)) is disordered. Over residues 26–40 (ESEEEESSDLEESSG) the composition is skewed to acidic residues. Low complexity predominate over residues 46–108 (PPKKQQKAAV…AVVGKGAKNG (63 aa)). 5 repeat units span residues 55–61 (VTPAKKA), 62–68 (ATPAKKA), 69–75 (ATPAKKA), 76–82 (VTPAKKA), and 84–90 (ATPAKKA). A 5 X 7 AA tandem repeats of X-T-P-X-K-K-X region spans residues 55–90 (VTPAKKAATPAKKAATPAKKAVTPAKKAVATPAKKA). Phosphoserine occurs at positions 116 and 136. Positions 116-142 (SEEEDEDDEDDEEDEDEEEESDEEEEP) are enriched in acidic residues. Residues 143–168 (AVPVKPAAKKSAAAVPAKKPAVVPAK) show a composition bias toward low complexity. Residue Ser-171 is modified to Phosphoserine. Acidic residues predominate over residues 171-194 (SEEEEEEDDEEEDEEDDESEDEAM). Over residues 196 to 213 (TTPAPVKKPTPAKATPAK) the composition is skewed to low complexity. A compositionally biased stretch (acidic residues) spans 218–246 (SEDEEDEEDEDEDEEDEDDEEEDEEESED). RRM domains follow at residues 281-357 (FSLF…KAKS), 371-445 (RTLF…YTGE), 461-535 (KTLI…FSSP), and 553-628 (KTLF…FAKP). A disordered region spans residues 631 to 694 (EFQRGGGFGG…KPQGKKIKFE (64 aa)). Positions 633 to 680 (QRGGGFGGGFGGRGGRGGRGGGRGGFGGRGGGRGFGGRGGGFRGGRGG) are enriched in gly residues. Basic and acidic residues predominate over residues 681 to 694 (GGDHKPQGKKIKFE).

In terms of processing, highly phosphorylated during mitosis.

The protein localises to the nucleus. It is found in the nucleolus. In terms of biological role, nucleolin is the major nucleolar protein of growing eukaryotic cells. It is found associated with intranucleolar chromatin and pre-ribosomal particles. It induces chromatin decondensation by binding to histone H1. It is thought to play a role in pre-rRNA transcription and ribosome assembly. This chain is Nucleolin (NCL), found in Gallus gallus (Chicken).